The chain runs to 275 residues: Dermonecrotic toxin SpaSicTox-betaIIA3 (275 aa).

Residue His5 is part of the active site. Mg(2+) contacts are provided by Glu25 and Asp27. The Nucleophile role is filled by His41. 2 disulfides stabilise this stretch: Cys45-Cys51 and Cys47-Cys190. Mg(2+) is bound at residue Asp85.

It belongs to the arthropod phospholipase D family. Class II subfamily. The cofactor is Mg(2+). In terms of tissue distribution, expressed by the venom gland.

The protein resides in the secreted. The catalysed reaction is an N-(acyl)-sphingosylphosphocholine = an N-(acyl)-sphingosyl-1,3-cyclic phosphate + choline. It catalyses the reaction an N-(acyl)-sphingosylphosphoethanolamine = an N-(acyl)-sphingosyl-1,3-cyclic phosphate + ethanolamine. It carries out the reaction a 1-acyl-sn-glycero-3-phosphocholine = a 1-acyl-sn-glycero-2,3-cyclic phosphate + choline. The enzyme catalyses a 1-acyl-sn-glycero-3-phosphoethanolamine = a 1-acyl-sn-glycero-2,3-cyclic phosphate + ethanolamine. Functionally, dermonecrotic toxins cleave the phosphodiester linkage between the phosphate and headgroup of certain phospholipids (sphingolipid and lysolipid substrates), forming an alcohol (often choline) and a cyclic phosphate. This toxin acts on sphingomyelin (SM). It may also act on ceramide phosphoethanolamine (CPE), lysophosphatidylcholine (LPC) and lysophosphatidylethanolamine (LPE), but not on lysophosphatidylserine (LPS), and lysophosphatidylglycerol (LPG). It acts by transphosphatidylation, releasing exclusively cyclic phosphate products as second products. Induces dermonecrosis, hemolysis, increased vascular permeability, edema, inflammatory response, and platelet aggregation. This chain is Dermonecrotic toxin SpaSicTox-betaIIA3, found in Sicarius patagonicus (Six-eyed sand spider).